The chain runs to 662 residues: uncharacterized protein (662 aa).

Residues S145, E164, W173, D184, and Y190 each contribute to the FAD site. A disordered region spans residues 638–662; sequence SRLETSGVPREGVQRPGSRLRRRPS.

The protein belongs to the FAD-binding monooxygenase family. Requires FAD as cofactor.

This is an uncharacterized protein from Sinorhizobium fredii (strain NBRC 101917 / NGR234).